Reading from the N-terminus, the 98-residue chain is NADH-ubiquinone oxidoreductase chain 4L (98 aa).

A run of 3 helical transmembrane segments spans residues 1–21 (MPYI…GMLI), 29–49 (SLLC…LTIL), and 61–81 (IILL…LVMV).

Belongs to the complex I subunit 4L family. In terms of assembly, core subunit of respiratory chain NADH dehydrogenase (Complex I) which is composed of 45 different subunits.

It localises to the mitochondrion inner membrane. It catalyses the reaction a ubiquinone + NADH + 5 H(+)(in) = a ubiquinol + NAD(+) + 4 H(+)(out). Core subunit of the mitochondrial membrane respiratory chain NADH dehydrogenase (Complex I) which catalyzes electron transfer from NADH through the respiratory chain, using ubiquinone as an electron acceptor. Part of the enzyme membrane arm which is embedded in the lipid bilayer and involved in proton translocation. In Cephalopachus bancanus (Western tarsier), this protein is NADH-ubiquinone oxidoreductase chain 4L (MT-ND4L).